Here is a 152-residue protein sequence, read N- to C-terminus: MWRALRRLIAANPMGFFLWSIITKWYLIIAVASLITLYYTVLGLKKIGFIDYFGRETEDILSQSKAVAQNCIPKLKLVNGKLPLNEFWDCLSDPGEYKHEEVTGARVLEDEINKFMQKQTDSIADTAHPIIHPYEKLENQNNLNNTLSDNNR.

This is an uncharacterized protein from Rickettsia prowazekii (strain Madrid E).